A 357-amino-acid chain; its full sequence is DNA integrity scanning protein DisA (357 aa).

The DAC domain occupies 3–141 (RPTLRETVAR…GGERHVVADS (139 aa)). Residues Gly70, Leu88, and 101–105 (TRHRS) contribute to the ATP site.

This sequence belongs to the DisA family. As to quaternary structure, homooctamer. Mg(2+) serves as cofactor.

The catalysed reaction is 2 ATP = 3',3'-c-di-AMP + 2 diphosphate. Participates in a DNA-damage check-point. DisA forms globular foci that rapidly scan along the chromosomes searching for lesions. Its function is as follows. Also has diadenylate cyclase activity, catalyzing the condensation of 2 ATP molecules into cyclic di-AMP (c-di-AMP). c-di-AMP likely acts as a signaling molecule that may couple DNA integrity with a cellular process. This chain is DNA integrity scanning protein DisA, found in Mycobacterium avium (strain 104).